The following is a 178-amino-acid chain: ATP synthase subunit delta (178 aa).

Belongs to the ATPase delta chain family. As to quaternary structure, F-type ATPases have 2 components, F(1) - the catalytic core - and F(0) - the membrane proton channel. F(1) has five subunits: alpha(3), beta(3), gamma(1), delta(1), epsilon(1). F(0) has three main subunits: a(1), b(2) and c(10-14). The alpha and beta chains form an alternating ring which encloses part of the gamma chain. F(1) is attached to F(0) by a central stalk formed by the gamma and epsilon chains, while a peripheral stalk is formed by the delta and b chains.

It localises to the cell inner membrane. In terms of biological role, f(1)F(0) ATP synthase produces ATP from ADP in the presence of a proton or sodium gradient. F-type ATPases consist of two structural domains, F(1) containing the extramembraneous catalytic core and F(0) containing the membrane proton channel, linked together by a central stalk and a peripheral stalk. During catalysis, ATP synthesis in the catalytic domain of F(1) is coupled via a rotary mechanism of the central stalk subunits to proton translocation. This protein is part of the stalk that links CF(0) to CF(1). It either transmits conformational changes from CF(0) to CF(1) or is implicated in proton conduction. The polypeptide is ATP synthase subunit delta (Marinomonas sp. (strain MWYL1)).